A 318-amino-acid polypeptide reads, in one-letter code: DNA primase small subunit PriS (318 aa).

Active-site residues include D95, D97, and D224.

It belongs to the eukaryotic-type primase small subunit family. Heterodimer of a small subunit (PriS) and a large subunit (PriL). It depends on Mg(2+) as a cofactor. Mn(2+) is required as a cofactor.

In terms of biological role, catalytic subunit of DNA primase, an RNA polymerase that catalyzes the synthesis of short RNA molecules used as primers for DNA polymerase during DNA replication. The small subunit contains the primase catalytic core and has DNA synthesis activity on its own. Binding to the large subunit stabilizes and modulates the activity, increasing the rate of DNA synthesis while decreasing the length of the DNA fragments, and conferring RNA synthesis capability. The DNA polymerase activity may enable DNA primase to also catalyze primer extension after primer synthesis. May also play a role in DNA repair. This chain is DNA primase small subunit PriS, found in Sulfurisphaera tokodaii (strain DSM 16993 / JCM 10545 / NBRC 100140 / 7) (Sulfolobus tokodaii).